The primary structure comprises 441 residues: Proline--tRNA ligase (441 aa).

It belongs to the class-II aminoacyl-tRNA synthetase family. ProS type 2 subfamily. As to quaternary structure, homodimer.

It localises to the cytoplasm. The enzyme catalyses tRNA(Pro) + L-proline + ATP = L-prolyl-tRNA(Pro) + AMP + diphosphate. In terms of biological role, catalyzes the attachment of proline to tRNA(Pro) in a two-step reaction: proline is first activated by ATP to form Pro-AMP and then transferred to the acceptor end of tRNA(Pro). In Methylorubrum populi (strain ATCC BAA-705 / NCIMB 13946 / BJ001) (Methylobacterium populi), this protein is Proline--tRNA ligase.